The chain runs to 190 residues: Cysteine dioxygenase (190 aa).

His78, His80, and His132 together coordinate Fe cation. A cross-link (3'-(S-cysteinyl)-tyrosine (Cys-Tyr)) is located at residues 85–149 (CFVKILDGEL…SNGAVSLHLY (65 aa)).

This sequence belongs to the cysteine dioxygenase family. The cofactor is Fe cation. In terms of processing, the thioether cross-link between Cys-85 and Tyr-149 plays a structural role through stabilizing the Fe(2+) ion, and prevents the production of highly damaging free hydroxyl radicals by holding the oxygen radical via hydroxyl hydrogen.

The catalysed reaction is L-cysteine + O2 = 3-sulfino-L-alanine + H(+). It participates in organosulfur biosynthesis; taurine biosynthesis; hypotaurine from L-cysteine: step 1/2. This chain is Cysteine dioxygenase (cdo-1), found in Caenorhabditis briggsae.